The chain runs to 529 residues: Bifunctional purine biosynthesis protein PurH (529 aa).

An MGS-like domain is found at 1 to 148 (MQQRRPVRRA…KNHKDVAIVV (148 aa)). Lys287 is subject to N6-acetyllysine.

It belongs to the PurH family.

The catalysed reaction is (6R)-10-formyltetrahydrofolate + 5-amino-1-(5-phospho-beta-D-ribosyl)imidazole-4-carboxamide = 5-formamido-1-(5-phospho-D-ribosyl)imidazole-4-carboxamide + (6S)-5,6,7,8-tetrahydrofolate. The enzyme catalyses IMP + H2O = 5-formamido-1-(5-phospho-D-ribosyl)imidazole-4-carboxamide. The protein operates within purine metabolism; IMP biosynthesis via de novo pathway; 5-formamido-1-(5-phospho-D-ribosyl)imidazole-4-carboxamide from 5-amino-1-(5-phospho-D-ribosyl)imidazole-4-carboxamide (10-formyl THF route): step 1/1. It participates in purine metabolism; IMP biosynthesis via de novo pathway; IMP from 5-formamido-1-(5-phospho-D-ribosyl)imidazole-4-carboxamide: step 1/1. The protein is Bifunctional purine biosynthesis protein PurH of Escherichia coli O17:K52:H18 (strain UMN026 / ExPEC).